A 572-amino-acid polypeptide reads, in one-letter code: MSKLIKGIAASDGVAIAKAYLLVEPDLTFDKNEKVTDVEGEVAKFNNAIEASKVELTKIRNNAEVQLGADKAAIFDAHLLVLDDPELIQPIQDKIKNENANAASALTDVTTQFVTIFESMDNEYMKERAADIRDVSKRVLSHILGVELPNPSMIDESVVIVGNDLTPSDTAQLNKEFVQGFATNIGGRTSHSAIMSRSLEIPAIVGTKSITQEAKQGDMIIVDGLNGDVIVNPTEDELIAYQDKRERYFADKKELQKLRDADTVTVDGVHAELAANIGTPNDLPGVIENGAQGIGLYRTEFLYMGRDQMPTEEEQFEAYKEVLEAMDGKRVVVRTLDIGGDKELSYLNLPEEMNPFLGYRAIRLCLAQQDIFRPQLRALLRASVYGKLNIMFPMVATINEFREAKAILLEEKENLKNEGHDISDDIELGIMVEIPATAALADVFAKEVDFFSIGTNDLIQYTLAADRMSERVSYLYQPYNPSILRLVKQVIEASHKEGKWTGMCGEMAGDETAIPLLLGLGLDEFSMSATSILKARRQINGLSKNEMTELANRAVDCATQEEVIELVNNYVK.

His-191 serves as the catalytic Tele-phosphohistidine intermediate. Phosphoenolpyruvate contacts are provided by Arg-298 and Arg-334. 2 residues coordinate Mg(2+): Glu-433 and Asp-457. Residues 456–457 (ND) and Arg-467 contribute to the phosphoenolpyruvate site. Catalysis depends on Cys-504, which acts as the Proton donor.

It belongs to the PEP-utilizing enzyme family. Homodimer. It depends on Mg(2+) as a cofactor.

The protein localises to the cytoplasm. It carries out the reaction L-histidyl-[protein] + phosphoenolpyruvate = N(pros)-phospho-L-histidyl-[protein] + pyruvate. Functionally, general (non sugar-specific) component of the phosphoenolpyruvate-dependent sugar phosphotransferase system (sugar PTS). This major carbohydrate active-transport system catalyzes the phosphorylation of incoming sugar substrates concomitantly with their translocation across the cell membrane. Enzyme I transfers the phosphoryl group from phosphoenolpyruvate (PEP) to the phosphoryl carrier protein (HPr). This is Phosphoenolpyruvate-protein phosphotransferase (ptsI) from Staphylococcus aureus (strain MRSA252).